Here is a 226-residue protein sequence, read N- to C-terminus: Phosphatidylserine decarboxylase proenzyme (226 aa).

Residue S184 is the Schiff-base intermediate with substrate; via pyruvic acid of the active site. Residue S184 is modified to Pyruvic acid (Ser); by autocatalysis.

Belongs to the phosphatidylserine decarboxylase family. PSD-A subfamily. As to quaternary structure, heterodimer of a large membrane-associated beta subunit and a small pyruvoyl-containing alpha subunit. Pyruvate serves as cofactor. Is synthesized initially as an inactive proenzyme. Formation of the active enzyme involves a self-maturation process in which the active site pyruvoyl group is generated from an internal serine residue via an autocatalytic post-translational modification. Two non-identical subunits are generated from the proenzyme in this reaction, and the pyruvate is formed at the N-terminus of the alpha chain, which is derived from the carboxyl end of the proenzyme. The post-translation cleavage follows an unusual pathway, termed non-hydrolytic serinolysis, in which the side chain hydroxyl group of the serine supplies its oxygen atom to form the C-terminus of the beta chain, while the remainder of the serine residue undergoes an oxidative deamination to produce ammonia and the pyruvoyl prosthetic group on the alpha chain.

The protein resides in the cell membrane. The enzyme catalyses a 1,2-diacyl-sn-glycero-3-phospho-L-serine + H(+) = a 1,2-diacyl-sn-glycero-3-phosphoethanolamine + CO2. Its pathway is phospholipid metabolism; phosphatidylethanolamine biosynthesis; phosphatidylethanolamine from CDP-diacylglycerol: step 2/2. In terms of biological role, catalyzes the formation of phosphatidylethanolamine (PtdEtn) from phosphatidylserine (PtdSer). The chain is Phosphatidylserine decarboxylase proenzyme from Ehrlichia canis (strain Jake).